The chain runs to 302 residues: Ornithine carbamoyltransferase (302 aa).

Residues 53 to 56, Q80, R104, and 131 to 134 each bind carbamoyl phosphate; these read STRT and HPCQ. L-ornithine contacts are provided by residues N162, D219, and 223 to 224; that span reads SM. Carbamoyl phosphate-binding positions include 259–260 and R287; that span reads CL.

It belongs to the aspartate/ornithine carbamoyltransferase superfamily. OTCase family.

Its subcellular location is the cytoplasm. The enzyme catalyses carbamoyl phosphate + L-ornithine = L-citrulline + phosphate + H(+). It functions in the pathway amino-acid biosynthesis; L-arginine biosynthesis; L-arginine from L-ornithine and carbamoyl phosphate: step 1/3. In terms of biological role, reversibly catalyzes the transfer of the carbamoyl group from carbamoyl phosphate (CP) to the N(epsilon) atom of ornithine (ORN) to produce L-citrulline. The sequence is that of Ornithine carbamoyltransferase from Hydrogenovibrio crunogenus (strain DSM 25203 / XCL-2) (Thiomicrospira crunogena).